Here is an 898-residue protein sequence, read N- to C-terminus: Serine/threonine-protein kinase TAO3 (898 aa).

Residues F24–V277 form the Protein kinase domain. ATP contacts are provided by residues I30–V38 and K53. D147 (proton acceptor) is an active-site residue. Disordered regions lie at residues T316–S362 and D405–Q425. S324 bears the Phosphoserine; by ATM mark. S331, S343, S346, and S349 each carry phosphoserine. Residues G334 to P351 show a composition bias toward polar residues. Positions S352–S362 are enriched in low complexity. T357 is subject to Phosphothreonine. The residue at position 359 (S359) is a Phosphoserine. Residues D405 to P416 show a composition bias toward basic and acidic residues. S442 is modified (phosphoserine). Coiled coils occupy residues E452–N502, F548–L649, and L754–S879. Positions E565–E596 are disordered. Position 830 is an N6-acetyllysine (K830).

It belongs to the protein kinase superfamily. STE Ser/Thr protein kinase family. STE20 subfamily. Self-associates. Interacts with ERN1 and TRAF2. Interaction with TRAF2 is facilitated under ER stress conditions, such as treatment with tunicamycin, and may promote TRAF2 phosphorylation. Interacts (via N-terminus) with STK25; the interaction promotes STK25 abundance at the level of protein expression and/or stability. In terms of assembly, (Microbial infection) Interacts with herpes simplex virus 1 UL37 protein. In terms of processing, autophosphorylated. Phosphorylation at Ser-324 by ATM following DNA damage is required for activation of the p38/MAPK14 stress-activated MAPK cascade. Phosphorylated at Ser-324 and on Tyr residues during T cell activation. Phosphorylated by LRRK2. In terms of tissue distribution, ubiquitously expressed at a low level, and highly expressed in peripheral blood leukocytes (PBLs), thymus, spleen, kidney, skeletal muscle, heart and liver.

The protein localises to the cytoplasm. The protein resides in the cell membrane. It localises to the membrane raft. Its subcellular location is the lipid droplet. The catalysed reaction is L-seryl-[protein] + ATP = O-phospho-L-seryl-[protein] + ADP + H(+). It carries out the reaction L-threonyl-[protein] + ATP = O-phospho-L-threonyl-[protein] + ADP + H(+). In terms of biological role, serine/threonine-protein kinase that acts as a regulator of the p38/MAPK14 stress-activated MAPK cascade and of the MAPK8/JNK cascade. In response to DNA damage, involved in the G2/M transition DNA damage checkpoint by activating the p38/MAPK14 stress-activated MAPK cascade, probably by mediating phosphorylation of upstream MAP2K3 and MAP2K6 kinases. Inhibits basal activity of the MAPK8/JNK cascade and diminishes its activation in response to epidermal growth factor (EGF). Positively regulates canonical T cell receptor (TCR) signaling by preventing early PTPN6/SHP1-mediated inactivation of LCK, ensuring sustained TCR signaling that is required for optimal activation and differentiation of T cells. Phosphorylates PTPN6/SHP1 on 'Thr-394', leading to its polyubiquitination and subsequent proteasomal degradation. Required for cell surface expression of metalloprotease ADAM10 on type 1 transitional B cells which is necessary for their NOTCH-mediated development into marginal zone B cells. Also required for the NOTCH-mediated terminal differentiation of splenic conventional type 2 dendritic cells. Positively regulates osteoblast differentiation by acting as an upstream activator of the JNK pathway. Promotes JNK signaling in hepatocytes and positively regulates hepatocyte lipid storage by inhibiting beta-oxidation and triacylglycerol secretion while enhancing lipid synthesis. Restricts age-associated inflammation by negatively regulating differentiation of macrophages and their production of pro-inflammatory cytokines. Plays a role in negatively regulating the abundance of regulatory T cells in white adipose tissue. The chain is Serine/threonine-protein kinase TAO3 (TAOK3) from Homo sapiens (Human).